Here is a 396-residue protein sequence, read N- to C-terminus: 8-amino-7-oxononanoate synthase (396 aa).

Arg-29 serves as a coordination point for substrate. Residue 116 to 117 coordinates pyridoxal 5'-phosphate; that stretch reads GY. Residue His-141 participates in substrate binding. Positions 187, 215, and 243 each coordinate pyridoxal 5'-phosphate. Lys-246 bears the N6-(pyridoxal phosphate)lysine mark. Position 360 (Thr-360) interacts with substrate.

The protein belongs to the class-II pyridoxal-phosphate-dependent aminotransferase family. BioF subfamily. In terms of assembly, homodimer. Requires pyridoxal 5'-phosphate as cofactor.

The enzyme catalyses 6-carboxyhexanoyl-[ACP] + L-alanine + H(+) = (8S)-8-amino-7-oxononanoate + holo-[ACP] + CO2. It participates in cofactor biosynthesis; biotin biosynthesis. Its function is as follows. Catalyzes the decarboxylative condensation of pimeloyl-[acyl-carrier protein] and L-alanine to produce 8-amino-7-oxononanoate (AON), [acyl-carrier protein], and carbon dioxide. The protein is 8-amino-7-oxononanoate synthase of Nitrosospira multiformis (strain ATCC 25196 / NCIMB 11849 / C 71).